The following is a 333-amino-acid chain: Ketol-acid reductoisomerase (NADP(+)) (333 aa).

Positions 2 to 182 (AKLYYEKDCN…GGARAGVLKT (181 aa)) constitute a KARI N-terminal Rossmann domain. NADP(+) contacts are provided by residues 25 to 28 (YGSQ), serine 51, serine 53, and 83 to 86 (DEKQ). Residue histidine 108 is part of the active site. Glycine 134 lines the NADP(+) pocket. The KARI C-terminal knotted domain occupies 183–328 (TFKEETETDL…KELRDMMSWS (146 aa)). Positions 191, 195, 227, and 231 each coordinate Mg(2+). Serine 252 contacts substrate.

Belongs to the ketol-acid reductoisomerase family. It depends on Mg(2+) as a cofactor.

It catalyses the reaction (2R)-2,3-dihydroxy-3-methylbutanoate + NADP(+) = (2S)-2-acetolactate + NADPH + H(+). The enzyme catalyses (2R,3R)-2,3-dihydroxy-3-methylpentanoate + NADP(+) = (S)-2-ethyl-2-hydroxy-3-oxobutanoate + NADPH + H(+). Its pathway is amino-acid biosynthesis; L-isoleucine biosynthesis; L-isoleucine from 2-oxobutanoate: step 2/4. It participates in amino-acid biosynthesis; L-valine biosynthesis; L-valine from pyruvate: step 2/4. Functionally, involved in the biosynthesis of branched-chain amino acids (BCAA). Catalyzes an alkyl-migration followed by a ketol-acid reduction of (S)-2-acetolactate (S2AL) to yield (R)-2,3-dihydroxy-isovalerate. In the isomerase reaction, S2AL is rearranged via a Mg-dependent methyl migration to produce 3-hydroxy-3-methyl-2-ketobutyrate (HMKB). In the reductase reaction, this 2-ketoacid undergoes a metal-dependent reduction by NADPH to yield (R)-2,3-dihydroxy-isovalerate. This Alkaliphilus metalliredigens (strain QYMF) protein is Ketol-acid reductoisomerase (NADP(+)).